We begin with the raw amino-acid sequence, 393 residues long: Acetylornithine aminotransferase (393 aa).

Residues 100–101 and F132 contribute to the pyridoxal 5'-phosphate site; that span reads GT. Residue R135 coordinates N(2)-acetyl-L-ornithine. Residue 217 to 220 participates in pyridoxal 5'-phosphate binding; sequence DEIQ. K246 bears the N6-(pyridoxal phosphate)lysine mark. Position 275 (S275) interacts with N(2)-acetyl-L-ornithine. Residue T276 coordinates pyridoxal 5'-phosphate.

Belongs to the class-III pyridoxal-phosphate-dependent aminotransferase family. ArgD subfamily. As to quaternary structure, homodimer. The cofactor is pyridoxal 5'-phosphate.

Its subcellular location is the cytoplasm. The enzyme catalyses N(2)-acetyl-L-ornithine + 2-oxoglutarate = N-acetyl-L-glutamate 5-semialdehyde + L-glutamate. It functions in the pathway amino-acid biosynthesis; L-arginine biosynthesis; N(2)-acetyl-L-ornithine from L-glutamate: step 4/4. The polypeptide is Acetylornithine aminotransferase (Campylobacter jejuni subsp. jejuni serotype O:2 (strain ATCC 700819 / NCTC 11168)).